The following is a 71-amino-acid chain: DNA gyrase inhibitor YacG (71 aa).

Zn(2+) contacts are provided by Cys9, Cys12, Cys28, and Cys32. The tract at residues 43 to 71 is disordered; that stretch reads EEKRIPSQSESNDSDEWSEMPEQDPKPFN. Positions 54-64 are enriched in acidic residues; sequence NDSDEWSEMPE.

This sequence belongs to the DNA gyrase inhibitor YacG family. As to quaternary structure, interacts with GyrB. Zn(2+) serves as cofactor.

Its function is as follows. Inhibits all the catalytic activities of DNA gyrase by preventing its interaction with DNA. Acts by binding directly to the C-terminal domain of GyrB, which probably disrupts DNA binding by the gyrase. In Proteus mirabilis (strain HI4320), this protein is DNA gyrase inhibitor YacG.